The primary structure comprises 245 residues: Eukaryotic translation initiation factor 6 (245 aa).

Tyr-113 carries the post-translational modification Phosphotyrosine. Phosphothreonine is present on Thr-165. The residue at position 166 (Ser-166) is a Phosphoserine. 2 positions are modified to phosphoserine; by CK1: Ser-174 and Ser-175. Position 235 is a phosphoserine; by PKC (Ser-235). Residues Ser-239 and Ser-243 each carry the phosphoserine modification.

This sequence belongs to the eIF-6 family. Monomer. Associates with the 60S ribosomal subunit. Interacts with RACK1. Interacts with DICER1, AGO2, TARBP2, MOV10 and RPL7A; they form a large RNA-induced silencing complex (RISC). Post-translationally, phosphorylation at Ser-174 and Ser-175 by CSNK1D/CK1 promotes nuclear export. Ufmylated by UFL1.

The protein localises to the cytoplasm. It is found in the nucleus. The protein resides in the nucleolus. Functionally, binds to the 60S ribosomal subunit and prevents its association with the 40S ribosomal subunit to form the 80S initiation complex in the cytoplasm. Behaves as a stimulatory translation initiation factor downstream insulin/growth factors. Is also involved in ribosome biogenesis. Associates with pre-60S subunits in the nucleus and is involved in its nuclear export. Cytoplasmic release of TIF6 from 60S subunits and nuclear relocalization is promoted by a RACK1 (RACK1)-dependent protein kinase C activity. In tissues responsive to insulin, controls fatty acid synthesis and glycolysis by exerting translational control of adipogenic transcription factors such as CEBPB, CEBPD and ATF4 that have G/C rich or uORF in their 5'UTR. Required for ROS-dependent megakaryocyte maturation and platelets formation, controls the expression of mitochondrial respiratory chain genes involved in reactive oxygen species (ROS) synthesis. Involved in miRNA-mediated gene silencing by the RNA-induced silencing complex (RISC). Required for both miRNA-mediated translational repression and miRNA-mediated cleavage of complementary mRNAs by RISC. Modulates cell cycle progression and global translation of pre-B cells, its activation seems to be rate-limiting in tumorigenesis and tumor growth. The sequence is that of Eukaryotic translation initiation factor 6 (Eif6) from Rattus norvegicus (Rat).